Reading from the N-terminus, the 321-residue chain is 2,3,4,5-tetrahydropyridine-2,6-dicarboxylate N-succinyltransferase (321 aa).

Residues Asp166 and Glu183 each contribute to the Mg(2+) site. Glu199 acts as the Acyl-anhydride intermediate in catalysis. Succinyl-CoA is bound by residues Arg201, Gly216, Ser219, Ala242, 257 to 258, Gly265, Lys281, and 294 to 297; these read EA and RRNS.

It belongs to the type 2 tetrahydrodipicolinate N-succinyltransferase family. As to quaternary structure, homotrimer.

Its subcellular location is the cytoplasm. The catalysed reaction is (S)-2,3,4,5-tetrahydrodipicolinate + succinyl-CoA + H2O = (S)-2-succinylamino-6-oxoheptanedioate + CoA. It functions in the pathway amino-acid biosynthesis; L-lysine biosynthesis via DAP pathway; LL-2,6-diaminopimelate from (S)-tetrahydrodipicolinate (succinylase route): step 1/3. In terms of biological role, catalyzes the conversion of the cyclic tetrahydrodipicolinate (THDP) into the acyclic N-succinyl-L-2-amino-6-oxopimelate using succinyl-CoA. The sequence is that of 2,3,4,5-tetrahydropyridine-2,6-dicarboxylate N-succinyltransferase from Rothia mucilaginosa (strain DY-18) (Stomatococcus mucilaginosus).